The chain runs to 160 residues: Cytochrome b6-f complex subunit 4 (160 aa).

3 helical membrane passes run 36-56 (LLYI…GLAV), 95-115 (LLGV…PFLE), and 131-151 (TIFL…ALPI).

It belongs to the cytochrome b family. PetD subfamily. The 4 large subunits of the cytochrome b6-f complex are cytochrome b6, subunit IV (17 kDa polypeptide, petD), cytochrome f and the Rieske protein, while the 4 small subunits are petG, petL, petM and petN. The complex functions as a dimer.

Its subcellular location is the plastid. The protein resides in the chloroplast thylakoid membrane. Functionally, component of the cytochrome b6-f complex, which mediates electron transfer between photosystem II (PSII) and photosystem I (PSI), cyclic electron flow around PSI, and state transitions. This Anthoceros angustus (Hornwort) protein is Cytochrome b6-f complex subunit 4.